The primary structure comprises 166 residues: 3-isopropylmalate dehydratase small subunit (166 aa).

This sequence belongs to the LeuD family. LeuD type 2 subfamily. As to quaternary structure, heterodimer of LeuC and LeuD.

The catalysed reaction is (2R,3S)-3-isopropylmalate = (2S)-2-isopropylmalate. Its pathway is amino-acid biosynthesis; L-leucine biosynthesis; L-leucine from 3-methyl-2-oxobutanoate: step 2/4. In terms of biological role, catalyzes the isomerization between 2-isopropylmalate and 3-isopropylmalate, via the formation of 2-isopropylmaleate. This chain is 3-isopropylmalate dehydratase small subunit, found in Nautilia profundicola (strain ATCC BAA-1463 / DSM 18972 / AmH).